The sequence spans 145 residues: Hemoglobin subunit beta (145 aa).

The Globin domain maps to 1-145; the sequence is MLTAEEKAAV…VANALAHRYH (145 aa). Residue Thr-11 is modified to Phosphothreonine. A Phosphoserine modification is found at Ser-43. Lys-58 carries the post-translational modification N6-acetyllysine. His-62 contributes to the heme b binding site. Lys-81 carries the post-translational modification N6-acetyllysine. A heme b-binding site is contributed by His-91. Cys-92 is modified (S-nitrosocysteine).

It belongs to the globin family. In terms of assembly, heterotetramer of two alpha chains and two beta chains. Red blood cells.

Involved in oxygen transport from the lung to the various peripheral tissues. The protein is Hemoglobin subunit beta (HBB) of Tragelaphus strepsiceros (Greater kudu).